The primary structure comprises 166 residues: Endoribonuclease YbeY (166 aa).

3 residues coordinate Zn(2+): His132, His136, and His142.

This sequence belongs to the endoribonuclease YbeY family. The cofactor is Zn(2+).

It localises to the cytoplasm. In terms of biological role, single strand-specific metallo-endoribonuclease involved in late-stage 70S ribosome quality control and in maturation of the 3' terminus of the 16S rRNA. This is Endoribonuclease YbeY from Clostridium botulinum (strain Eklund 17B / Type B).